The following is a 1585-amino-acid chain: Sterol 3-beta-glucosyltransferase (1585 aa).

The span at 1 to 18 (MSPPISPTPPPLQPPFPP) shows a compositional bias: pro residues. 3 disordered regions span residues 1–154 (MSPP…CDFR), 177–225 (PWEE…PTHT), and 249–279 (YQYA…LPKG). Composition is skewed to polar residues over residues 65–77 (DQAT…SLIP), 105–123 (DAQT…STHE), and 132–148 (PRTS…QMAE). Positions 178–194 (WEEDDDSDDGEDDDEFI) are enriched in acidic residues. Residues 255-273 (ETSSRRTSAAGSESSSEGE) show a composition bias toward low complexity. In terms of domain architecture, GRAM 1 spans 387 to 555 (ERLMEVFGLE…EAIVDVEKSP (169 aa)). The region spanning 438–530 (LLVKSGPLHK…WVKAIQKVMF (93 aa)) is the PH domain. 2 disordered regions span residues 625 to 645 (TSHA…LGMA) and 666 to 852 (DGEP…GSES). Residues 670–689 (LEEHSQGPHHNDEDASHLPH) show a composition bias toward basic and acidic residues. Polar residues-rich tracts occupy residues 760–785 (TDSS…QASV), 806–817 (NKPSVVDSNSAE), and 827–840 (SWTS…QMVK). The 72-residue stretch at 862-933 (RKFRTFFALS…RDLYGLKAQK (72 aa)) folds into the GRAM 2 domain. UDP-alpha-D-glucose is bound by residues S1043, R1044, D1046, I1358, H1360, H1373, G1377, T1378, D1397, and Q1398. The segment at 1499–1555 (NRVRSRSRSRSRSSQGRFSPRRHTVDDDGWSVVSGGSRSRSGSASAVTSPERRPLNI) is disordered. Over residues 1529–1545 (SVVSGGSRSRSGSASAV) the composition is skewed to low complexity.

It belongs to the glycosyltransferase 28 family.

The protein resides in the cytoplasm. It is found in the membrane. The catalysed reaction is a sterol + UDP-alpha-D-glucose = a sterol 3-beta-D-glucoside + UDP + H(+). It catalyses the reaction ergosterol + UDP-alpha-D-glucose = ergosteryl 3-beta-D-glucoside + UDP + H(+). In terms of biological role, sterol glycosyltransferase responsible for the glycosylation of ergosterol to form ergosterol-glucoside. The chain is Sterol 3-beta-glucosyltransferase from Cryptococcus neoformans var. neoformans serotype D (strain JEC21 / ATCC MYA-565) (Filobasidiella neoformans).